The following is a 423-amino-acid chain: Protein SOSEKI 5 (423 aa).

The tract at residues M1–I33 is disordered. A compositionally biased stretch (basic and acidic residues) spans R19–I33. The DIX-like oligomerization domain stretch occupies residues R45–D136. 2 disordered regions span residues S150–I172 and S196–T258. A compositionally biased stretch (polar residues) spans S196–Q211. 2 consecutive short sequence motifs (association to cell membranes) follow at residues A233–S234 and C303–G304. The disordered stretch occupies residues S379–Q423. The span at C406–A415 shows a compositional bias: basic residues.

Belongs to the SOSEKI family. In terms of assembly, homodimer. Forms long polymer filaments with other SOKs proteins polymers (e.g. SOK1, SOK2, SOK3 and SOK4) crucial for polar localization and biological activity. Binds to ANGUSTIFOLIA (AN). In terms of tissue distribution, expressed during embryogenesis and in roots.

Its subcellular location is the cell membrane. Its function is as follows. SOSEKI proteins (SOK1-5) locally interpret global polarity cues and can influence cell division orientation to coordinate cell polarization relative to body axes. In Arabidopsis thaliana (Mouse-ear cress), this protein is Protein SOSEKI 5.